A 98-amino-acid chain; its full sequence is Ferredoxin-like protein (98 aa).

To ferredoxins from P.putida and C.tartarivorum, ferredoxin I from A.vinelandii, ferredoxin II from D.desulfuricans.

Its function is as follows. Could be a 3Fe-4S cluster-containing protein. The sequence is that of Ferredoxin-like protein (fixX) from Rhizobium leguminosarum bv. trifolii.